A 719-amino-acid chain; its full sequence is DNA ligase (719 aa).

NAD(+)-binding positions include 42 to 46 (DAEYD), 91 to 92 (SL), and glutamate 125. Lysine 127 (N6-AMP-lysine intermediate) is an active-site residue. NAD(+)-binding residues include arginine 148, glutamate 184, lysine 300, and lysine 324. Zn(2+) is bound by residues cysteine 429, cysteine 432, cysteine 447, and cysteine 453. The 82-residue stretch at 638–719 (TASSPIAGKT…WLQLIEGSYI (82 aa)) folds into the BRCT domain.

This sequence belongs to the NAD-dependent DNA ligase family. LigA subfamily. Mg(2+) is required as a cofactor. It depends on Mn(2+) as a cofactor.

The enzyme catalyses NAD(+) + (deoxyribonucleotide)n-3'-hydroxyl + 5'-phospho-(deoxyribonucleotide)m = (deoxyribonucleotide)n+m + AMP + beta-nicotinamide D-nucleotide.. In terms of biological role, DNA ligase that catalyzes the formation of phosphodiester linkages between 5'-phosphoryl and 3'-hydroxyl groups in double-stranded DNA using NAD as a coenzyme and as the energy source for the reaction. It is essential for DNA replication and repair of damaged DNA. In Bartonella quintana (strain Toulouse) (Rochalimaea quintana), this protein is DNA ligase.